A 150-amino-acid polypeptide reads, in one-letter code: Phosphopantetheine adenylyltransferase (150 aa).

Serine 10 is a substrate binding site. ATP-binding positions include 10–11 (SF) and histidine 18. Substrate contacts are provided by lysine 42, threonine 74, and arginine 88. Residues 89–91 (GLR), glutamate 99, and 124–130 (LAYISSS) contribute to the ATP site.

It belongs to the bacterial CoaD family. In terms of assembly, homohexamer. The cofactor is Mg(2+).

The protein resides in the cytoplasm. It carries out the reaction (R)-4'-phosphopantetheine + ATP + H(+) = 3'-dephospho-CoA + diphosphate. It functions in the pathway cofactor biosynthesis; coenzyme A biosynthesis; CoA from (R)-pantothenate: step 4/5. In terms of biological role, reversibly transfers an adenylyl group from ATP to 4'-phosphopantetheine, yielding dephospho-CoA (dPCoA) and pyrophosphate. This chain is Phosphopantetheine adenylyltransferase, found in Cytophaga hutchinsonii (strain ATCC 33406 / DSM 1761 / CIP 103989 / NBRC 15051 / NCIMB 9469 / D465).